Here is a 702-residue protein sequence, read N- to C-terminus: Kinesin-like protein KIF3A (702 aa).

The Kinesin motor domain occupies 14 to 345 (NVKVVVRCRP…LRYANRAKNI (332 aa)). Residue 100 to 107 (GQTGTGKT) coordinates ATP. A coiled-coil region spans residues 355 to 593 (PKDALLRQFQ…LSRELRLQML (239 aa)). Disordered stretches follow at residues 372-424 (KKLE…KMIE) and 667-702 (LMKL…SLLQ). The segment covering 376-400 (EGEEISGSDISGSEEDDDEEGEIGE) has biased composition (acidic residues). Positions 410–424 (DQAGKKKVSPDKMIE) are enriched in basic and acidic residues. Residues 600–702 (PRDYQEMIEN…PETVIDSLLQ (103 aa)) are globular. Residues 675-690 (TSKGKARPKTGRRKRS) are compositionally biased toward basic residues. S690 carries the phosphoserine modification.

Belongs to the TRAFAC class myosin-kinesin ATPase superfamily. Kinesin family. Kinesin II subfamily. Heterodimer of KIF3A and KIF3B. Interacts with CIMAP3. Interacts with CLN3. Interacts with DCTN1. Interacts with FLCN. Interacts with AP3B1.

The protein localises to the cytoplasm. Its subcellular location is the cytoskeleton. The protein resides in the cell projection. It is found in the cilium. It localises to the microtubule organizing center. The protein localises to the centrosome. Its subcellular location is the centriole. In terms of biological role, microtubule-based anterograde translocator for membranous organelles. Plus end-directed microtubule sliding activity in vitro. Plays a role in primary cilia formation. Plays a role in centriole cohesion and subdistal appendage organization and function. Regulates the formation of the subdistal appendage via recruitment of DCTN1 to the centriole. Also required for ciliary basal feet formation and microtubule anchoring to mother centriole. In Pongo abelii (Sumatran orangutan), this protein is Kinesin-like protein KIF3A (KIF3A).